The primary structure comprises 370 residues: Histidinol-phosphate aminotransferase (370 aa).

Lysine 223 bears the N6-(pyridoxal phosphate)lysine mark.

This sequence belongs to the class-II pyridoxal-phosphate-dependent aminotransferase family. Histidinol-phosphate aminotransferase subfamily. As to quaternary structure, homodimer. Requires pyridoxal 5'-phosphate as cofactor.

It carries out the reaction L-histidinol phosphate + 2-oxoglutarate = 3-(imidazol-4-yl)-2-oxopropyl phosphate + L-glutamate. It participates in amino-acid biosynthesis; L-histidine biosynthesis; L-histidine from 5-phospho-alpha-D-ribose 1-diphosphate: step 7/9. This is Histidinol-phosphate aminotransferase from Methylobacterium sp. (strain 4-46).